We begin with the raw amino-acid sequence, 320 residues long: Quinolinate synthase (320 aa).

Residues His34 and Ser51 each coordinate iminosuccinate. Cys96 contributes to the [4Fe-4S] cluster binding site. Residues 122–124 and Ser139 each bind iminosuccinate; that span reads YIN. Cys182 is a binding site for [4Fe-4S] cluster. Residues 208 to 210 and Thr225 each bind iminosuccinate; that span reads HPE. Cys276 serves as a coordination point for [4Fe-4S] cluster.

Belongs to the quinolinate synthase family. Type 2 subfamily. [4Fe-4S] cluster serves as cofactor.

The protein resides in the cytoplasm. It carries out the reaction iminosuccinate + dihydroxyacetone phosphate = quinolinate + phosphate + 2 H2O + H(+). Its pathway is cofactor biosynthesis; NAD(+) biosynthesis; quinolinate from iminoaspartate: step 1/1. Its function is as follows. Catalyzes the condensation of iminoaspartate with dihydroxyacetone phosphate to form quinolinate. In Synechococcus sp. (strain ATCC 27144 / PCC 6301 / SAUG 1402/1) (Anacystis nidulans), this protein is Quinolinate synthase.